The sequence spans 337 residues: Ketol-acid reductoisomerase (NADP(+)) (337 aa).

One can recognise a KARI N-terminal Rossmann domain in the interval 3 to 183 (VEVFYDDDAD…GGTRAGVIKT (181 aa)). NADP(+) is bound by residues 26-29 (YGSQ), serine 52, serine 54, and 84-87 (DTAQ). Histidine 109 is a catalytic residue. Residue glycine 135 coordinates NADP(+). The KARI C-terminal knotted domain occupies 184-329 (TFTEETETDL…GRLRAMMSWV (146 aa)). Residues aspartate 192, glutamate 196, glutamate 228, and glutamate 232 each coordinate Mg(2+). Serine 253 lines the substrate pocket.

The protein belongs to the ketol-acid reductoisomerase family. Mg(2+) is required as a cofactor.

The enzyme catalyses (2R)-2,3-dihydroxy-3-methylbutanoate + NADP(+) = (2S)-2-acetolactate + NADPH + H(+). The catalysed reaction is (2R,3R)-2,3-dihydroxy-3-methylpentanoate + NADP(+) = (S)-2-ethyl-2-hydroxy-3-oxobutanoate + NADPH + H(+). It participates in amino-acid biosynthesis; L-isoleucine biosynthesis; L-isoleucine from 2-oxobutanoate: step 2/4. It functions in the pathway amino-acid biosynthesis; L-valine biosynthesis; L-valine from pyruvate: step 2/4. Its function is as follows. Involved in the biosynthesis of branched-chain amino acids (BCAA). Catalyzes an alkyl-migration followed by a ketol-acid reduction of (S)-2-acetolactate (S2AL) to yield (R)-2,3-dihydroxy-isovalerate. In the isomerase reaction, S2AL is rearranged via a Mg-dependent methyl migration to produce 3-hydroxy-3-methyl-2-ketobutyrate (HMKB). In the reductase reaction, this 2-ketoacid undergoes a metal-dependent reduction by NADPH to yield (R)-2,3-dihydroxy-isovalerate. The polypeptide is Ketol-acid reductoisomerase (NADP(+)) (Salinispora tropica (strain ATCC BAA-916 / DSM 44818 / JCM 13857 / NBRC 105044 / CNB-440)).